The sequence spans 20 residues: Pregnancy-associated glycoprotein 55h (20 aa).

Asn4 carries N-linked (GlcNAc...) asparagine glycosylation.

It belongs to the peptidase A1 family. In terms of tissue distribution, highly expressed in the placenta between day 60 and day 100 of gestation.

Its subcellular location is the secreted. The protein localises to the extracellular space. The protein is Pregnancy-associated glycoprotein 55h of Ovis aries (Sheep).